The primary structure comprises 556 residues: Formate--tetrahydrofolate ligase (556 aa).

65–72 (TPAGEGKS) serves as a coordination point for ATP.

Belongs to the formate--tetrahydrofolate ligase family.

It carries out the reaction (6S)-5,6,7,8-tetrahydrofolate + formate + ATP = (6R)-10-formyltetrahydrofolate + ADP + phosphate. Its pathway is one-carbon metabolism; tetrahydrofolate interconversion. The chain is Formate--tetrahydrofolate ligase from Streptococcus equi subsp. zooepidemicus (strain H70).